The sequence spans 456 residues: tRNA modification GTPase MnmE (456 aa).

3 residues coordinate (6S)-5-formyl-5,6,7,8-tetrahydrofolate: R23, E80, and K122. One can recognise a TrmE-type G domain in the interval 218–380; the sequence is AKRIVIVGPP…LKKHLSNRQK (163 aa). K(+) is bound at residue N228. GTP is bound by residues 228 to 233, 247 to 253, and 272 to 275; these read NAGKSS, TDLPGTT, and DTAG. S232 provides a ligand contact to Mg(2+). Residues T247, L249, and T252 each contribute to the K(+) site. T253 contributes to the Mg(2+) binding site. Position 456 (K456) interacts with (6S)-5-formyl-5,6,7,8-tetrahydrofolate.

It belongs to the TRAFAC class TrmE-Era-EngA-EngB-Septin-like GTPase superfamily. TrmE GTPase family. Homodimer. Heterotetramer of two MnmE and two MnmG subunits. The cofactor is K(+).

It is found in the cytoplasm. In terms of biological role, exhibits a very high intrinsic GTPase hydrolysis rate. Involved in the addition of a carboxymethylaminomethyl (cmnm) group at the wobble position (U34) of certain tRNAs, forming tRNA-cmnm(5)s(2)U34. This chain is tRNA modification GTPase MnmE, found in Buchnera aphidicola subsp. Schizaphis graminum (strain Sg).